The sequence spans 725 residues: Another transcription unit protein (725 aa).

A compositionally biased stretch (acidic residues) spans 1 to 10 (MGSQNSDDDS). 3 disordered regions span residues 1-379 (MGSQ…PETR), 566-603 (RQAM…EGSD), and 617-725 (YKKG…SDND). The segment covering 11-70 (GSSGSSRSGSRSVTPQGGSAPGSQRSRRSGSGSDRSRSGSRSSRSRSGSGSPRSARSGSA) has biased composition (low complexity). Positions 82–101 (RSKRSRSAHSRRSGSARSRK) are enriched in basic residues. The span at 104 to 116 (TPESPQSHRSGSL) shows a compositional bias: polar residues. Residues 117–140 (QSRKSGSPQSRRSGSPQSRKSGST) are compositionally biased toward low complexity. Residues 141–160 (HSRRSGSAHSRRSGSARSRK) show a composition bias toward basic residues. Residues Ser-175, Ser-186, Ser-188, and Ser-190 each carry the phosphoserine modification. Over residues 206 to 223 (SRSRSRSRSGSRTSRSRS) the composition is skewed to basic residues. A compositionally biased stretch (low complexity) spans 224 to 242 (KTGTPSPNRSRSGSASGSG). Ser-265, Ser-267, and Ser-269 each carry phosphoserine. Position 286 is a phosphothreonine (Thr-286). Phosphoserine occurs at positions 288, 290, and 312. The span at 306-318 (GDADDISDDEDEA) shows a compositional bias: acidic residues. Positions 325–353 (SPVRSKSRSQSKSHSHSRSMSHSRSRSRS) are enriched in basic residues. The segment covering 354–369 (RSRDKVESQVESAPKE) has biased composition (basic and acidic residues). Ser-355 is modified (phosphoserine). The span at 571–582 (NQHKSLPKKKKP) shows a compositional bias: basic residues. Thr-593 carries the post-translational modification Phosphothreonine. A phosphoserine mark is found at Ser-595, Ser-602, and Ser-631. Thr-632 bears the Phosphothreonine mark. Ser-635, Ser-636, and Ser-642 each carry phosphoserine. The span at 644–665 (FEARRSKKVDKAKASKALRDSD) shows a compositional bias: basic and acidic residues. The span at 710-725 (SGSGSGSGSGSGSDND) shows a compositional bias: gly residues.

This Drosophila melanogaster (Fruit fly) protein is Another transcription unit protein (Atu).